Reading from the N-terminus, the 185-residue chain is Elongation factor P (185 aa).

This sequence belongs to the elongation factor P family.

It is found in the cytoplasm. The protein operates within protein biosynthesis; polypeptide chain elongation. In terms of biological role, involved in peptide bond synthesis. Stimulates efficient translation and peptide-bond synthesis on native or reconstituted 70S ribosomes in vitro. Probably functions indirectly by altering the affinity of the ribosome for aminoacyl-tRNA, thus increasing their reactivity as acceptors for peptidyl transferase. The chain is Elongation factor P from Nitratidesulfovibrio vulgaris (strain DSM 19637 / Miyazaki F) (Desulfovibrio vulgaris).